The primary structure comprises 388 residues: Methylthioribose-1-phosphate isomerase (388 aa).

Asp-252 serves as the catalytic Proton donor.

Belongs to the eIF-2B alpha/beta/delta subunits family. MtnA subfamily.

It localises to the cytoplasm. Its subcellular location is the nucleus. The enzyme catalyses 5-(methylsulfanyl)-alpha-D-ribose 1-phosphate = 5-(methylsulfanyl)-D-ribulose 1-phosphate. It participates in amino-acid biosynthesis; L-methionine biosynthesis via salvage pathway; L-methionine from S-methyl-5-thio-alpha-D-ribose 1-phosphate: step 1/6. Its function is as follows. Catalyzes the interconversion of methylthioribose-1-phosphate (MTR-1-P) into methylthioribulose-1-phosphate (MTRu-1-P). The sequence is that of Methylthioribose-1-phosphate isomerase from Verticillium alfalfae (strain VaMs.102 / ATCC MYA-4576 / FGSC 10136) (Verticillium wilt of alfalfa).